Here is a 620-residue protein sequence, read N- to C-terminus: EF-hand calcium-binding domain-containing protein 7 (620 aa).

Residues 1-24 form a disordered region; it reads MANHSSLPSQKYAASERQEYQKPQ. EF-hand domains are found at residues 98-133 and 134-169; these read ATKNELLKAFRKIDTNNKGYILHNDLYEILTTKGEK and MSQEEVNSVFRLAEVNSNGKLDYNKFCSTFFKTCEQ. The segment at 176–234 is disordered; that stretch reads ERMDSNSKAKRQQFGSYIEKSPERSSSPKSSHGNLKLFDSETSTRKENKSSRPSSARSY. The segment covering 213-225 has biased composition (basic and acidic residues); the sequence is FDSETSTRKENKS. The 36-residue stretch at 394–429 folds into the EF-hand 3 domain; the sequence is EFKSALSDMFDIIDLDGNGLLSLAEYNFFEMRTSGE. Residues aspartate 407, aspartate 409, asparagine 411, and glutamate 418 each coordinate Ca(2+).

The protein localises to the cell projection. The protein resides in the cilium membrane. Its function is as follows. Plays a role in the ciliary Hedgehog (Hh) signaling. The chain is EF-hand calcium-binding domain-containing protein 7 (efcab7) from Xenopus laevis (African clawed frog).